Here is a 407-residue protein sequence, read N- to C-terminus: MSAVPLRNNKAAASAVRSVTVLGATGSIGDSTMDLLRASPERYRVEALTANGNVEALAKLAKEFSARFVAIADTSKFAELKAALAGTSTECGAGESAVIEAGARPADWVMAAVSGAAGLKPALAAVDRGAHVALANKECLVCAGDFFMQRAAKAGACILPADSEHNALFQALGSGNRDELVRVIITASGGPFRTWKPADIEQATLAQALKHPNWSMGQKITIDSASMMNKGLEVIEASYLFALSPDEIDVLVHPQSIIHGMVEFSDRSVVAQLGSPDMRTPIAHCLGWPDRIKGPAAKLDLAKIGQLTFEAPDFERFPGLRLAYDSLRTGKGATTVYNAANEVAVAAFIAGKIRFGAIARLVEATLEDWIRGGNQTPLTSADDAISVDHVARNRAAALLPQIALKAS.

NADPH is bound by residues Thr25, Gly26, Ser27, Ile28, Asn53, and Asn136. Lys137 is a 1-deoxy-D-xylulose 5-phosphate binding site. Glu138 is a binding site for NADPH. A Mn(2+)-binding site is contributed by Asp162. Ser163, Glu164, Ser188, and His211 together coordinate 1-deoxy-D-xylulose 5-phosphate. Glu164 is a binding site for Mn(2+). Gly217 is an NADPH binding site. 4 residues coordinate 1-deoxy-D-xylulose 5-phosphate: Ser224, Asn229, Lys230, and Glu233. Glu233 contacts Mn(2+).

Belongs to the DXR family. Requires Mg(2+) as cofactor. Mn(2+) is required as a cofactor.

The catalysed reaction is 2-C-methyl-D-erythritol 4-phosphate + NADP(+) = 1-deoxy-D-xylulose 5-phosphate + NADPH + H(+). The protein operates within isoprenoid biosynthesis; isopentenyl diphosphate biosynthesis via DXP pathway; isopentenyl diphosphate from 1-deoxy-D-xylulose 5-phosphate: step 1/6. Functionally, catalyzes the NADPH-dependent rearrangement and reduction of 1-deoxy-D-xylulose-5-phosphate (DXP) to 2-C-methyl-D-erythritol 4-phosphate (MEP). The polypeptide is 1-deoxy-D-xylulose 5-phosphate reductoisomerase (Bradyrhizobium diazoefficiens (strain JCM 10833 / BCRC 13528 / IAM 13628 / NBRC 14792 / USDA 110)).